The sequence spans 300 residues: GTPase Era (300 aa).

Residues 8–176 (RCGYVAIVGR…EAQIAKHLPE (169 aa)) enclose the Era-type G domain. The tract at residues 16–23 (GRPNVGKS) is G1. 16–23 (GRPNVGKS) serves as a coordination point for GTP. Residues 42 to 46 (QTTRH) are G2. Positions 63–66 (DTPG) are G3. GTP contacts are provided by residues 63 to 67 (DTPGM) and 125 to 128 (NKTD). The G4 stretch occupies residues 125-128 (NKTD). The interval 155–157 (ISA) is G5. The KH type-2 domain maps to 199-283 (VREKIMRQLG…MLNLWVKVKG (85 aa)).

Belongs to the TRAFAC class TrmE-Era-EngA-EngB-Septin-like GTPase superfamily. Era GTPase family. As to quaternary structure, monomer.

The protein localises to the cytoplasm. Its subcellular location is the cell inner membrane. In terms of biological role, an essential GTPase that binds both GDP and GTP, with rapid nucleotide exchange. Plays a role in 16S rRNA processing and 30S ribosomal subunit biogenesis and possibly also in cell cycle regulation and energy metabolism. The chain is GTPase Era from Pseudomonas putida (strain ATCC 700007 / DSM 6899 / JCM 31910 / BCRC 17059 / LMG 24140 / F1).